Here is a 472-residue protein sequence, read N- to C-terminus: Chromosomal replication initiator protein DnaA (472 aa).

Positions 1 to 80 (MDTKQIWFTT…YQVNVRVIIS (80 aa)) are domain I, interacts with DnaA modulators. Residues 80-130 (SSATPAPSEPVAVTPSEPSPTTEVAEPSFASFNQAAPMLNQLPLGDPNRSS) are domain II. Positions 131 to 347 (VLNPRYTFSS…GCLNRVIAYA (217 aa)) are domain III, AAA+ region. Positions 175, 177, 178, and 179 each coordinate ATP. Residues 348-472 (NLNRTPVTVE…RQRLYGENAR (125 aa)) form a domain IV, binds dsDNA region.

Belongs to the DnaA family. As to quaternary structure, oligomerizes as a right-handed, spiral filament on DNA at oriC.

It is found in the cytoplasm. Its function is as follows. Plays an essential role in the initiation and regulation of chromosomal replication. ATP-DnaA binds to the origin of replication (oriC) to initiate formation of the DNA replication initiation complex once per cell cycle. Binds the DnaA box (a 9 base pair repeat at the origin) and separates the double-stranded (ds)DNA. Forms a right-handed helical filament on oriC DNA; dsDNA binds to the exterior of the filament while single-stranded (ss)DNA is stabiized in the filament's interior. The ATP-DnaA-oriC complex binds and stabilizes one strand of the AT-rich DNA unwinding element (DUE), permitting loading of DNA polymerase. After initiation quickly degrades to an ADP-DnaA complex that is not apt for DNA replication. Binds acidic phospholipids. The polypeptide is Chromosomal replication initiator protein DnaA (Herpetosiphon aurantiacus (strain ATCC 23779 / DSM 785 / 114-95)).